The chain runs to 271 residues: Dermonecrotic toxin LhSicTox-alphaIA2aiv (271 aa).

H3 is a catalytic residue. Mg(2+) is bound by residues E23 and D25. Catalysis depends on H39, which acts as the Nucleophile. 2 disulfide bridges follow: C43–C49 and C45–C188. Mg(2+) is bound at residue D83.

It belongs to the arthropod phospholipase D family. Class II subfamily. It depends on Mg(2+) as a cofactor. Expressed by the venom gland.

The protein localises to the secreted. The catalysed reaction is an N-(acyl)-sphingosylphosphocholine = an N-(acyl)-sphingosyl-1,3-cyclic phosphate + choline. The enzyme catalyses an N-(acyl)-sphingosylphosphoethanolamine = an N-(acyl)-sphingosyl-1,3-cyclic phosphate + ethanolamine. It carries out the reaction a 1-acyl-sn-glycero-3-phosphocholine = a 1-acyl-sn-glycero-2,3-cyclic phosphate + choline. It catalyses the reaction a 1-acyl-sn-glycero-3-phosphoethanolamine = a 1-acyl-sn-glycero-2,3-cyclic phosphate + ethanolamine. Its function is as follows. Dermonecrotic toxins cleave the phosphodiester linkage between the phosphate and headgroup of certain phospholipids (sphingolipid and lysolipid substrates), forming an alcohol (often choline) and a cyclic phosphate. This toxin acts on sphingomyelin (SM). It may also act on ceramide phosphoethanolamine (CPE), lysophosphatidylcholine (LPC) and lysophosphatidylethanolamine (LPE), but not on lysophosphatidylserine (LPS), and lysophosphatidylglycerol (LPG). It acts by transphosphatidylation, releasing exclusively cyclic phosphate products as second products. Induces dermonecrosis, hemolysis, increased vascular permeability, edema, inflammatory response, and platelet aggregation. This chain is Dermonecrotic toxin LhSicTox-alphaIA2aiv, found in Loxosceles hirsuta (Recluse spider).